Consider the following 183-residue polypeptide: ATP-dependent protease subunit HslV (183 aa).

Thr-2 is a catalytic residue. Positions 157, 160, and 163 each coordinate Na(+).

It belongs to the peptidase T1B family. HslV subfamily. A double ring-shaped homohexamer of HslV is capped on each side by a ring-shaped HslU homohexamer. The assembly of the HslU/HslV complex is dependent on binding of ATP.

The protein localises to the cytoplasm. The catalysed reaction is ATP-dependent cleavage of peptide bonds with broad specificity.. Its activity is regulated as follows. Allosterically activated by HslU binding. In terms of biological role, protease subunit of a proteasome-like degradation complex believed to be a general protein degrading machinery. This is ATP-dependent protease subunit HslV from Vibrio campbellii (strain ATCC BAA-1116).